A 403-amino-acid chain; its full sequence is GPI-N-acetylgalactosamine transferase PGAP4 (403 aa).

The Cytoplasmic portion of the chain corresponds to 1 to 22 (MTTSTSPAAMLLRRLRRLSWGS). A helical membrane pass occupies residues 23-43 (TAVQLFILTVVTFGLLAPLAC). At 44–264 (HRLLHSYFYL…INPEPMRILE (221 aa)) the chain is on the lumenal side. A UDP-N-acetyl-alpha-D-galactosamine-binding site is contributed by V109. 2 disulfide bridges follow: C132–C136 and C144–C194. A DXD motif motif is present at residues 211-213 (EDD). The helical transmembrane segment at 265–285 (WVGVGMLLGPVLTWIYMRFAC) threads the bilayer. The Cytoplasmic segment spans residues 286–287 (RP). The chain crosses the membrane as a helical span at residues 288–308 (GFSWPVMLFFCLYSMGLVELV). The Lumenal segment spans residues 309 to 403 (GRHYFLELRR…LRYNFHPSLL (95 aa)). Residues C332 and C333 are joined by a disulfide bond. The UDP-N-acetyl-alpha-D-galactosamine site is built by T334, P335, and K362.

It belongs to the PGAP4 family. In terms of processing, glycosylated.

It is found in the golgi apparatus membrane. Its function is as follows. Golgi-resident glycosylphosphatidylinositol (GPI)-N-acetylgalactosamine transferase that catalyzes the N-acetyl-beta-D-galactosamine transfer from an UDP-N-acetyl-alpha-D-galactosamine to the 4-OH-position of first mannose of the glycosylphosphatidylinositol (GPI) of a GPI-anchored protein (GPI-AP). This modification occurs after the fatty acid remodeling step of the GPI-anchor maturation. In Mus musculus (Mouse), this protein is GPI-N-acetylgalactosamine transferase PGAP4.